The primary structure comprises 331 residues: Sucrose operon repressor (331 aa).

One can recognise an HTH lacI-type domain in the interval 1 to 56; that stretch reads MASLKDVARLAGVSMMTVSRVMHNAESVRPATRDRVLQAIQTLNYVPDLSARKMRA. The segment at residues 4 to 23 is a DNA-binding region (H-T-H motif); it reads LKDVARLAGVSMMTVSRVMH.

Repressor for the csc operon. Binds D-fructose as an inducer. The sequence is that of Sucrose operon repressor (cscR) from Escherichia coli.